We begin with the raw amino-acid sequence, 721 residues long: 1,4-alpha-glucan branching enzyme GlgB (721 aa).

Residue aspartate 400 is the Nucleophile of the active site. Catalysis depends on glutamate 453, which acts as the Proton donor.

It belongs to the glycosyl hydrolase 13 family. GlgB subfamily. In terms of assembly, monomer.

It catalyses the reaction Transfers a segment of a (1-&gt;4)-alpha-D-glucan chain to a primary hydroxy group in a similar glucan chain.. It functions in the pathway glycan biosynthesis; glycogen biosynthesis. Functionally, catalyzes the formation of the alpha-1,6-glucosidic linkages in glycogen by scission of a 1,4-alpha-linked oligosaccharide from growing alpha-1,4-glucan chains and the subsequent attachment of the oligosaccharide to the alpha-1,6 position. The polypeptide is 1,4-alpha-glucan branching enzyme GlgB (Chlamydia felis (strain Fe/C-56) (Chlamydophila felis)).